We begin with the raw amino-acid sequence, 474 residues long: Cysteine protease ATG4A (474 aa).

Residues 1-32 (MTSLPGRGVSPSSSDPLCEGNAAPSSSSSSGQ) form a disordered region. Residue Cys-161 is the Nucleophile of the active site. Residues Asp-358 and His-360 contribute to the active site. Polar residues predominate over residues 439–449 (KQMYNEESSSG). The interval 439–474 (KQMYNEESSSGDGMDSINVEGLDGSGETGEEEWQIL) is disordered.

It belongs to the peptidase C54 family. Interacts with ATG8.

It is found in the cytoplasm. The catalysed reaction is [protein]-C-terminal L-amino acid-glycyl-phosphatidylethanolamide + H2O = [protein]-C-terminal L-amino acid-glycine + a 1,2-diacyl-sn-glycero-3-phosphoethanolamine. Functionally, cysteine protease that plays a key role in autophagy by mediating both proteolytic activation and delipidation of ATG8 family proteins. The protease activity is required for proteolytic activation of ATG8 family proteins: cleaves the C-terminal amino acid of ATG8 proteins to reveal a C-terminal glycine. Exposure of the glycine at the C-terminus is essential for ATG8 proteins conjugation to phosphatidylethanolamine (PE) and insertion to membranes, which is necessary for autophagy. In addition to the protease activity, also mediates delipidation of PE-conjugated ATG8 proteins. The protein is Cysteine protease ATG4A (ATG4A) of Oryza sativa subsp. japonica (Rice).